The following is a 287-amino-acid chain: Lactamase-like protein nscB (287 aa).

Residues His62, His64, Asp66, and His67 each contribute to the Zn(2+) site. Catalysis depends on Asp66, which acts as the Proton donor/acceptor.

This sequence belongs to the metallo-beta-lactamase superfamily. Requires Zn(2+) as cofactor.

Its pathway is secondary metabolite biosynthesis. Lactamase-like protein; part of the gene cluster that mediates the biosynthesis of neosartoricin B, a prenylated anthracenone that probably exhibits T-cell antiproliferative activity, suggestive of a physiological role as an immunosuppressive agent. The non-reducing polyketide synthase nscA probably synthesizes and cyclizes the decaketide backbone. The hydrolase nscB then mediates the product release through hydrolysis followed by spontaneous decarboxylation. The prenyltransferase nscD catalyzes the addition of the dimethylallyl group to the aromatic C5. The FAD-dependent monooxygenase nscC is then responsible for the stereospecific hydroxylation at C2. Neosartoricin B can be converted into two additional compounds neosartoricins C and D. Neosartoricin C is a spirocyclic compound that is cyclized through the attack of C3 hydroxyl on C14, followed by dehydration. On the other hand, neosartoricin D is a further cyclized compound in which attack of C2 on C14 in neosartoricin C results in the formation of the acetal-containing dioxabicyclo-octanone ring. Both of these compounds are novel and possibly represent related metabolites of the gene cluster. The protein is Lactamase-like protein nscB of Trichophyton verrucosum (strain HKI 0517).